A 130-amino-acid chain; its full sequence is Small ribosomal subunit protein uS8 (130 aa).

It belongs to the universal ribosomal protein uS8 family. In terms of assembly, part of the 30S ribosomal subunit.

One of the primary rRNA binding proteins, it binds directly to 16S rRNA central domain where it helps coordinate assembly of the platform of the 30S subunit. The protein is Small ribosomal subunit protein uS8 of Methanococcoides burtonii (strain DSM 6242 / NBRC 107633 / OCM 468 / ACE-M).